Here is a 596-residue protein sequence, read N- to C-terminus: Elongation factor 4 (596 aa).

The 183-residue stretch at 2–184 (KQIRNFSIIA…VIVAKIPPPE (183 aa)) folds into the tr-type G domain. Residues 14–19 (DHGKST) and 131–134 (NKID) contribute to the GTP site.

This sequence belongs to the TRAFAC class translation factor GTPase superfamily. Classic translation factor GTPase family. LepA subfamily.

Its subcellular location is the cell inner membrane. The enzyme catalyses GTP + H2O = GDP + phosphate + H(+). Its function is as follows. Required for accurate and efficient protein synthesis under certain stress conditions. May act as a fidelity factor of the translation reaction, by catalyzing a one-codon backward translocation of tRNAs on improperly translocated ribosomes. Back-translocation proceeds from a post-translocation (POST) complex to a pre-translocation (PRE) complex, thus giving elongation factor G a second chance to translocate the tRNAs correctly. Binds to ribosomes in a GTP-dependent manner. The polypeptide is Elongation factor 4 (Shewanella baltica (strain OS155 / ATCC BAA-1091)).